The following is a 1175-amino-acid chain: Potassium/sodium hyperpolarization-activated cyclic nucleotide-gated channel 4 (1175 aa).

Residues 1–259 (MDKLPPSMRK…SAGFWIIHPY (259 aa)) lie on the Cytoplasmic side of the membrane. Positions 17–186 (QQVGAKAWIM…SSCGEQRPAD (170 aa)) are disordered. Residues 26–36 (MDEEEDAEEEG) are compositionally biased toward acidic residues. A compositionally biased stretch (low complexity) spans 60–75 (PSAAAAAAGGAESRGA). Residues 111-126 (SRGGGGGGGSTGGGSH) show a composition bias toward gly residues. Residues 128–140 (HLHDSAEERRLIA) show a composition bias toward basic and acidic residues. Ser145 carries the post-translational modification Phosphoserine. The span at 162 to 175 (PGAPAPPAASPPQV) shows a compositional bias: pro residues. Residues 260 to 288 (SDFRFYWDLTMLLLMVGNLIIIPVGITFF) traverse the membrane as a helical segment. The Extracellular portion of the chain corresponds to 289–292 (KDEN). Residues 293–316 (TTPWIVFNVVSDTFFLIDLVLNFR) traverse the membrane as a helical segment. The Cytoplasmic segment spans residues 317-329 (TGIVVEDNTDIIL). The chain crosses the membrane as a helical span at residues 330–352 (DPRRIKMKYLKSWFVVDFVSSIP). The Extracellular segment spans residues 353 to 374 (VDYIFLIVETRIDSEVYKTARA). A helical; Voltage-sensor membrane pass occupies residues 375–410 (LRIVRFTKILSLLRLLRLSRLIRYIHQWEEIFHMTY). Residues 411-413 (DLA) lie on the Cytoplasmic side of the membrane. Residues 414 to 444 (SAVVRIVNLIGMMLLLCHWDGCLQFLVPMLQ) traverse the membrane as a helical segment. The Extracellular portion of the chain corresponds to 445–449 (DFPDD). The pore-forming intramembrane region spans 450 to 478 (CWVSLNNMVNNSWGKQYSYALFKAMSHML). Over 479–488 (CIGYGRQAPM) the chain is Extracellular. A helical transmembrane segment spans residues 489-521 (GMSDVWLTMLSMIVGATCYAMFIGHATALIQSL). Residues 522 to 1175 (DSSRRQYQEK…PVRSKLPSNL (654 aa)) are Cytoplasmic-facing. 3',5'-cyclic GMP-binding residues include Tyr560, Lys563, Phe565, and Glu567. 3',5'-cyclic AMP contacts are provided by Gly660, Glu661, Cys663, Arg670, Thr671, Val674, and Arg711. Disordered regions lie at residues 801-820 (AIFR…AGQT) and 830-1175 (LAPS…PSNL). Low complexity-rich tracts occupy residues 839-854 (SPAS…SSAS), 900-912 (LGGS…SPLL), 948-966 (SPTS…LSPG), and 984-1004 (RLPF…SPRG). Positions 1038 to 1050 (ASSPPPPPPPPAP) are enriched in pro residues. A phosphoserine mark is found at Ser1089 and Ser1093. The span at 1102–1114 (PPFPRAPGRPPGA) shows a compositional bias: pro residues.

Belongs to the potassium channel HCN family. In terms of assembly, homotetramer. The channel is composed of a homo- or heterotetrameric complex of pore-forming subunits. Interacts with PEX5L with a 4:4 HCN4:PEX5L stoichiometry; reduces the effects of cAMP on the voltage-dependence and rate of activation. Interacts with IRAG1; regulates HCN4 channel activity. Interacts with IRAG2; regulates HCN4 channel activity. Post-translationally, S-palmitoylated. In terms of tissue distribution, highly expressed in the heart sinoatrial node (SAN). Not detected in atrium, ventricle, forebrain or cerebellum. Detected at very low levels in total brain.

Its subcellular location is the cell membrane. The enzyme catalyses K(+)(in) = K(+)(out). The catalysed reaction is Na(+)(in) = Na(+)(out). Its activity is regulated as follows. Activated by cAMP and to a lesser extent by cGMP and cCMP. cAMP binding causes a conformation change that leads to the assembly of an active tetramer and channel opening by shifting the voltage-dependency towards more positive voltages. Binding of cAMP removes a tonic inhibition conferred by cyclic nucleotide-binding domain (CNBD) on channel opening. Cyclic dinucleotides can modulate HCN4 channel; cyclic dinucleotides acting as potent antagonists of cAMP. Inhibited by extracellular Cs(+) ions. Auxiliary subunits can also regulate HCN4 channel. IRAG1 causes a gain-of-function by shifting HCN4 activation to more depolarized membrane potentials in the absence of cAMP. In contrast, IRAG2 causes a loss-of-function by inhibiting cAMP-dependent potentiation of HCN4 activation. Hyperpolarization-activated ion channel that are permeable to Na(+) and K(+) ions with very slow activation and inactivation. Exhibits higher selectivity for K(+) over Na(+) ions. Contributes to the native pacemaker currents in heart (If) that regulate the rhythm of heart beat. Contributes to the native pacemaker currents in neurons (Ih). May mediate responses to sour stimuli. This chain is Potassium/sodium hyperpolarization-activated cyclic nucleotide-gated channel 4 (HCN4), found in Oryctolagus cuniculus (Rabbit).